Here is a 68-residue protein sequence, read N- to C-terminus: Intracellular calcium channel modulator CCP-Ts (68 aa).

The first 23 residues, 1–23 (MNPKLLIVIGLLLATGVCSFAKA), serve as a signal peptide directing secretion. 3 cysteine pairs are disulfide-bonded: cysteine 33-cysteine 47, cysteine 40-cysteine 53, and cysteine 46-cysteine 62.

It belongs to the scorpion calcin-like family. Expressed by the venom gland. In intravenously injected mice, the labeled toxin has preference for heart, liver and lungs.

The protein resides in the secreted. Its subcellular location is the nucleus. Cell penetrating peptide (CPP) that increases intracellular calcium release through the activation of nuclear inositol 1,4,5-trisphosphate receptors (ITPR) of cardiomyocytes, thereby causing an increase in the contraction frequency of these cells. In vivo, this toxin is not lethal to mice, hovewer anti-CPP serum reduces venom lethality, suggesting that this toxin is lethal when it acts in synergy with other venom components. This is Intracellular calcium channel modulator CCP-Ts from Tityus serrulatus (Brazilian scorpion).